Reading from the N-terminus, the 609-residue chain is UvrABC system protein C (609 aa).

Residues 15 to 92 (TGSGVYQMQD…IKQFRPRYNV (78 aa)) enclose the GIY-YIG domain. The UVR domain maps to 202 to 237 (DQVIIKLTERMEVASENLVFEEAAHYRDQIRQLRRL).

The protein belongs to the UvrC family. In terms of assembly, interacts with UvrB in an incision complex.

The protein resides in the cytoplasm. In terms of biological role, the UvrABC repair system catalyzes the recognition and processing of DNA lesions. UvrC both incises the 5' and 3' sides of the lesion. The N-terminal half is responsible for the 3' incision and the C-terminal half is responsible for the 5' incision. The polypeptide is UvrABC system protein C (Coxiella burnetii (strain CbuG_Q212) (Coxiella burnetii (strain Q212))).